We begin with the raw amino-acid sequence, 263 residues long: Acyl-[acyl-carrier-protein]--UDP-N-acetylglucosamine O-acyltransferase (263 aa).

This sequence belongs to the transferase hexapeptide repeat family. LpxA subfamily. As to quaternary structure, homotrimer.

It is found in the cytoplasm. The enzyme catalyses a (3R)-hydroxyacyl-[ACP] + UDP-N-acetyl-alpha-D-glucosamine = a UDP-3-O-[(3R)-3-hydroxyacyl]-N-acetyl-alpha-D-glucosamine + holo-[ACP]. Its pathway is glycolipid biosynthesis; lipid IV(A) biosynthesis; lipid IV(A) from (3R)-3-hydroxytetradecanoyl-[acyl-carrier-protein] and UDP-N-acetyl-alpha-D-glucosamine: step 1/6. Involved in the biosynthesis of lipid A, a phosphorylated glycolipid that anchors the lipopolysaccharide to the outer membrane of the cell. This is Acyl-[acyl-carrier-protein]--UDP-N-acetylglucosamine O-acyltransferase from Stenotrophomonas maltophilia (strain K279a).